Here is a 513-residue protein sequence, read N- to C-terminus: Laccase (513 aa).

Plastocyanin-like domains follow at residues 45–81 (PTRL…STHF), 101–178 (KTVV…HDPK), 240–318 (WPYL…ILAN), and 378–509 (QDEY…MDIT). Residues His105, His107, His153, and His155 each coordinate Cu cation. Cu cation contacts are provided by His419, His422, His424, His491, Cys492, His493, His497, and Met502.

It belongs to the multicopper oxidase family. As to quaternary structure, monomer. Cu(2+) is required as a cofactor.

It localises to the spore coat. The enzyme catalyses 4 hydroquinone + O2 = 4 benzosemiquinone + 2 H2O. It carries out the reaction 2 (4Z,15Z)-bilirubin IXalpha + O2 = 2 biliverdin IXalpha + 2 H2O. Inhibited by azide. In terms of biological role, multicopper oxidase that catalyzes the oxidation of a variety of substrates, including phenolic and non-phenolic compounds. Substrates include syringaldazine (SGZ), 2,6-dimethoxyphenol (2,6-DMP) and the non-phenolic compound 2,2'-azino-bis(3-ethylbenzothiazoline-6-sulfonic acid) (ABTS). Has no tyrosinase activity. Is implicated in the biosynthesis of a brownish pigment that characterizes sporulating colonies of B.subtilis, and which appears to be a melanin-like product and to confer protection against UV light. Functionally, in vitro, also shows strong bilirubin oxidase (BOD) activity, and can catalyze the oxidation of free bilirubin (UB), direct bilirubin (conjugated with glucuronic acid, DB) and ditaurobilirubin. The polypeptide is Laccase (Bacillus subtilis (strain 168)).